Reading from the N-terminus, the 1045-residue chain is MTTKTVIKTKSYKLYDFNVYDGFSKAENLGKNGYDKFKDNKKFIIQMFGINTAGQTASIIVEDFNPFYYIKVGDDWTESDRCEFVSHIKGKLGVYYEDSIVASKLVKRHKLYGFDDNKLHTFIKISFTNTGAYNRAKKMFYIDSNVDGVFKRELLPDGYLYEETKCYLYEANIPPLLKLFHIQEISPSGWVQIQTDKITKMRQKSTHCAYEYITSYKHLKKADKDDIVKYSICSFDIEASSSHGDFPVPIKDYKKLATNILEYYNEMEDKTKFDVTCFKKHINAGYGYERCPDIATVYPKLKNISNEQLDNIFSNFMLYIPAKDQSRKDYIKENEESDSESDNDDEEDKKENDGADEAAAFHKRHKKVKKYNKTANILQIIQDDKCEHDTKLFELNKALTKFYPELEGDMVTFIGMTFLNYSDKKPHTRYIIVKGGCEVPEKYKSWVLENNVKIIEKTTEKGVLLEFTKIMTLENPHIVTGYNINGFDFDFMFKRSKEIGCTEDFLKLSKNIDEVCMTKDWKTGEMEIAKNKIVLASGEYNLSFVNMPGRIIVDMCVVFRREYTLSSNKLDYVSSYFISDSVKKIDVDKENNQTRIYSKNLTGLTVGCYVKFDEVSHSTNNYKKGQKFEILDINLDTASFLIDSAEELDLKKYKINWGLAKDDVSVQEIFELANKSDIDRFTVGKYCLGDCDNVIWLLIKVDIITDKVEMSNLCDVPLNFLLQRGQGIKLQSYVSKKCGEKNTLMPIVEKNLNDGGYEGAHVFNPKTGLYLEDPVACVDYSSLYPSSMISENLSHDSKVWTKEYDLSNNLIHSTGEKDADENFIYDNLPNYTYVDVKYDTYEYLRKTPKAAEKKTVVGYKICRFAQFPKGKAIMPAILEDLLSARKATKKLMGKEEDPFKQNIYDKRQLSIKVTANSLYGQCGARTSAFYEKDVAASCTAIGRKLLFYGKDVIEGCYNNVEITLSDGVKVVTKAECVYGDTDSVFFKFNLKTPEGKRIINKQALIYTIELAKQAGELATKFLKKPTRFRVRENILAFQSIIQEKI.

Residues 331–355 (IKENEESDSESDNDDEEDKKENDGA) are disordered. Residues 335-348 (EESDSESDNDDEED) are compositionally biased toward acidic residues.

It belongs to the DNA polymerase type-B family.

The catalysed reaction is DNA(n) + a 2'-deoxyribonucleoside 5'-triphosphate = DNA(n+1) + diphosphate. In Phaeocystis pouchetii (PpV01), this protein is DNA polymerase (dpo).